The sequence spans 473 residues: Anthocyanidin-3-O-glucoside rhamnosyltransferase (473 aa).

The protein belongs to the UDP-glycosyltransferase family. In terms of tissue distribution, expressed in petals, styles and anthers.

It functions in the pathway pigment biosynthesis; anthocyanin biosynthesis. Functionally, controls the rhamnosylation of reddish anthocyanidin-3-O-glucosides, which is the first step in a series of modifications that finally yield magenta or blue/purple coloured anthocyanins. Controls the conversion of anthocyanidin-3-O-glucosides to anthocyanidin-3-O-rutinosides. The protein is Anthocyanidin-3-O-glucoside rhamnosyltransferase of Petunia hybrida (Petunia).